The chain runs to 1516 residues: Mediator of RNA polymerase II transcription subunit 14 (1516 aa).

Disordered stretches follow at residues leucine 22 to alanine 98 and methionine 1434 to glutamine 1516. Residues serine 34–alanine 47 show a composition bias toward low complexity. Residues serine 72 to aspartate 83 show a composition bias toward basic and acidic residues. The segment covering serine 1463–serine 1473 has biased composition (low complexity). The segment covering valine 1474–glycine 1483 has biased composition (gly residues). Residues glutamine 1502–glutamine 1516 show a composition bias toward low complexity.

It belongs to the Mediator complex subunit 14 family. Component of the Mediator complex.

It is found in the nucleus. Component of the Mediator complex, a coactivator involved in the regulated transcription of nearly all RNA polymerase II-dependent genes. Mediator functions as a bridge to convey information from gene-specific regulatory proteins to the basal RNA polymerase II transcription machinery. Mediator is recruited to promoters by direct interactions with regulatory proteins and serves as a scaffold for the assembly of a functional preinitiation complex with RNA polymerase II and the general transcription factors. Required for transcription in the embryo and for phosphorylation of the RNA polymerase II C-terminal domain repeat. The polypeptide is Mediator of RNA polymerase II transcription subunit 14 (rgr-1) (Caenorhabditis elegans).